The sequence spans 673 residues: Auxin response factor 9 (673 aa).

A DNA-binding region (TF-B3) is located at residues 126–228 (FCKTLTASDT…ELRVGVRRLM (103 aa)). 2 disordered regions span residues 356-386 (ELEPLDASNPQPPQPPLRNKRARPPASPSVV) and 514-545 (DSDQISQPSNGNKSDAPGTSSERSPLESQSRQ). The span at 516–545 (DQISQPSNGNKSDAPGTSSERSPLESQSRQ) shows a compositional bias: polar residues. In terms of domain architecture, PB1 spans 547 to 639 (RSCTKVIMQG…EEAKLLAPKS (93 aa)).

The protein belongs to the ARF family. In terms of assembly, homodimers and heterodimers. In terms of tissue distribution, expressed in roots, culms, leaves and young panicles.

It is found in the nucleus. In terms of biological role, auxin response factors (ARFs) are transcriptional factors that bind specifically to the DNA sequence 5'-TGTCTC-3' found in the auxin-responsive promoter elements (AuxREs). The polypeptide is Auxin response factor 9 (ARF9) (Oryza sativa subsp. japonica (Rice)).